Here is a 171-residue protein sequence, read N- to C-terminus: Sec-independent protein translocase protein TatB (171 aa).

The helical transmembrane segment at 2–22 threads the bilayer; that stretch reads FDGIGFMELLLIGVLGLVVLG. The segment at 69 to 171 is disordered; that stretch reads SKGLSNLSPE…DTRSNPKANG (103 aa). Over residues 88-97 the composition is skewed to polar residues; the sequence is QAAQSVNRPY. Composition is skewed to low complexity over residues 114 to 130 and 138 to 158; these read HSPV…HTSP and PTAT…SEPS. Positions 160–171 are enriched in polar residues; it reads GADTRSNPKANG.

Belongs to the TatB family. The Tat system comprises two distinct complexes: a TatABC complex, containing multiple copies of TatA, TatB and TatC subunits, and a separate TatA complex, containing only TatA subunits. Substrates initially bind to the TatABC complex, which probably triggers association of the separate TatA complex to form the active translocon.

Its subcellular location is the cell inner membrane. Functionally, part of the twin-arginine translocation (Tat) system that transports large folded proteins containing a characteristic twin-arginine motif in their signal peptide across membranes. Together with TatC, TatB is part of a receptor directly interacting with Tat signal peptides. TatB may form an oligomeric binding site that transiently accommodates folded Tat precursor proteins before their translocation. This chain is Sec-independent protein translocase protein TatB, found in Shewanella baltica (strain OS185).